We begin with the raw amino-acid sequence, 298 residues long: Ribosomal RNA small subunit methyltransferase A (298 aa).

S-adenosyl-L-methionine-binding residues include Asn30, Val32, Gly57, Glu78, Asp108, and Asn126.

It belongs to the class I-like SAM-binding methyltransferase superfamily. rRNA adenine N(6)-methyltransferase family. RsmA subfamily.

The protein resides in the cytoplasm. The enzyme catalyses adenosine(1518)/adenosine(1519) in 16S rRNA + 4 S-adenosyl-L-methionine = N(6)-dimethyladenosine(1518)/N(6)-dimethyladenosine(1519) in 16S rRNA + 4 S-adenosyl-L-homocysteine + 4 H(+). Its function is as follows. Specifically dimethylates two adjacent adenosines (A1518 and A1519) in the loop of a conserved hairpin near the 3'-end of 16S rRNA in the 30S particle. May play a critical role in biogenesis of 30S subunits. The chain is Ribosomal RNA small subunit methyltransferase A from Cutibacterium acnes (strain DSM 16379 / KPA171202) (Propionibacterium acnes).